We begin with the raw amino-acid sequence, 388 residues long: uncharacterized protein (388 aa).

It is found in the mitochondrion. This is an uncharacterized protein from Dictyostelium citrinum (Slime mold).